The following is a 211-amino-acid chain: UPF0056 membrane protein BUsg_257 (211 aa).

The next 6 membrane-spanning stretches (helical) occupy residues 14–34 (FFVS…FTTM), 54–74 (AFII…AFGI), 76–96 (INSF…SMIS), 116–136 (VVPL…TIVW), 144–164 (SDFL…WLCF), and 185–205 (IMGL…IKSI).

It belongs to the UPF0056 (MarC) family.

The protein localises to the cell membrane. The protein is UPF0056 membrane protein BUsg_257 of Buchnera aphidicola subsp. Schizaphis graminum (strain Sg).